The following is an 834-amino-acid chain: U-box domain-containing protein 33 (834 aa).

Residues 232-308 are disordered; the sequence is FSTPESEHQH…SPSSFPDGVD (77 aa). 2 stretches are compositionally biased toward polar residues: residues 243–273 and 284–293; these read SRVQ…GSLN and SEVTGSATVM. Residues 334–462 adopt a coiled-coil conformation; sequence LRRQKAEKNA…SHAETSTLQL (129 aa). In terms of domain architecture, Protein kinase spans 481-744; the sequence is FDSTLKIGEG…EVWRVLEPMR (264 aa). ATP is bound by residues 487–495 and Lys-508; that span reads IGEGGYGSI. The active-site Proton acceptor is Asp-603. The U-box domain occupies 762–834; the sequence is IAPPYFICPI…AIQEWLQHHL (73 aa).

It belongs to the protein kinase superfamily. Ser/Thr protein kinase family.

The enzyme catalyses L-seryl-[protein] + ATP = O-phospho-L-seryl-[protein] + ADP + H(+). It carries out the reaction L-threonyl-[protein] + ATP = O-phospho-L-threonyl-[protein] + ADP + H(+). It catalyses the reaction S-ubiquitinyl-[E2 ubiquitin-conjugating enzyme]-L-cysteine + [acceptor protein]-L-lysine = [E2 ubiquitin-conjugating enzyme]-L-cysteine + N(6)-ubiquitinyl-[acceptor protein]-L-lysine.. Its pathway is protein modification; protein ubiquitination. Functions as an E3 ubiquitin ligase. This chain is U-box domain-containing protein 33 (PUB33), found in Arabidopsis thaliana (Mouse-ear cress).